The chain runs to 455 residues: Epoxide hydrolase 1 (455 aa).

A helical; Signal-anchor for type III membrane protein membrane pass occupies residues 1 to 21; sequence MWLELILASVLGFVIYWFVSR. At 22-455 the chain is on the cytoplasmic side; sequence DKEETLPLED…RKFVSLAELQ (434 aa). Residue D226 is the Nucleophile of the active site. Residue R295 is modified to Dimethylated arginine. Y374 functions as the Proton donor in the catalytic mechanism. Catalysis depends on H431, which acts as the Proton acceptor. N6-acetyllysine is present on K439.

It belongs to the peptidase S33 family.

It is found in the microsome membrane. It localises to the endoplasmic reticulum membrane. It catalyses the reaction cis-stilbene oxide + H2O = (1R,2R)-hydrobenzoin. The catalysed reaction is 1-(4-methoxyphenyl)-N-methyl-N-[(3-methyloxetan-3-yl)methyl]methanamine + H2O = 2-{[(4-methoxybenzyl)(methyl)amino]methyl}-2-methylpropane-1,3-diol. The enzyme catalyses 8,9-epoxy-(5Z,11Z,14Z)-eicosatrienoate + H2O = 8,9-dihydroxy-(5Z,11Z,14Z)-eicosatrienoate. It carries out the reaction 11,12-epoxy-(5Z,8Z,14Z)-eicosatrienoate + H2O = 11,12-dihydroxy-(5Z,8Z,14Z)-eicosatrienoate. It catalyses the reaction 2-(5Z,8Z,11Z,14Z-eicosatetraenoyl)-glycerol + H2O = glycerol + (5Z,8Z,11Z,14Z)-eicosatetraenoate + H(+). With respect to regulation, inhibited by 10-hydroxystearamide and methoxy-arachidonyl fluorophosphate. Biotransformation enzyme that catalyzes the hydrolysis of arene and aliphatic epoxides to less reactive and more water soluble dihydrodiols by the trans addition of water. May play a role in the metabolism of endogenous lipids such as epoxide-containing fatty acids. Metabolizes the abundant endocannabinoid 2-arachidonoylglycerol (2-AG) to free arachidonic acid (AA) and glycerol. Binds 20(S)-hydroxycholesterol (20(S)-OHC). This Mus musculus (Mouse) protein is Epoxide hydrolase 1.